Reading from the N-terminus, the 614-residue chain is Zinc metalloproteinase-disintegrin-like Eoc1 (614 aa).

Positions 1–19 (MQVLLITISLAVLPYLGSS) are cleaved as a signal peptide. The propeptide occupies 20-193 (IILESGIVND…KASQLNLTPE (174 aa)). Glutamine 194 bears the Pyrrolidone carboxylic acid mark. A Peptidase M12B domain is found at 202 to 398 (KHIKVAIVAD…KMPQCILIKP (197 aa)). Asparagine 268 is a glycosylation site (N-linked (GlcNAc...) asparagine). 3 disulfide bridges follow: cysteine 313/cysteine 393, cysteine 353/cysteine 377, and cysteine 355/cysteine 360. A Zn(2+)-binding site is contributed by histidine 338. The active site involves glutamate 339. Zn(2+) contacts are provided by histidine 342 and histidine 348. N-linked (GlcNAc...) asparagine glycosylation occurs at asparagine 376. The 87-residue stretch at 406-492 (PPVCGNSLVE…ECPADQFQRN (87 aa)) folds into the Disintegrin domain. Ca(2+)-binding residues include valine 408, asparagine 411, leucine 413, glutamate 415, glutamate 418, and aspartate 421. 14 disulfides stabilise this stretch: cysteine 409–cysteine 438, cysteine 420–cysteine 433, cysteine 422–cysteine 428, cysteine 432–cysteine 455, cysteine 446–cysteine 452, cysteine 451–cysteine 477, cysteine 464–cysteine 484, cysteine 471–cysteine 503, cysteine 496–cysteine 508, cysteine 515–cysteine 565, cysteine 530–cysteine 576, cysteine 543–cysteine 553, cysteine 560–cysteine 602, and cysteine 596–cysteine 607. The D/ECD-tripeptide signature appears at 470–472 (ECD). N-linked (GlcNAc...) asparagine glycosylation is present at asparagine 498.

This sequence belongs to the venom metalloproteinase (M12B) family. P-III subfamily. P-IIIc sub-subfamily. Heterodimer; disulfide-linked. Zn(2+) is required as a cofactor. As to expression, expressed by the venom gland.

The protein localises to the secreted. In terms of biological role, this metalloproteinase hydrolyzes azocasein, and oxidized insulin B-chain. Also hydrolyzes the alpha-chain (FGA) and more slowly the beta-chain of fibrinogen (FGB), without affecting the gamma-chain. Does not cleave fibrin. Inhibits endothelial cell adhesion to extracellular matrix proteins such as fibrinogen, fibronectin, vitronectin, collagen I, and collagen IV. Induces apoptosis in vascular endothelial cells. This is Zinc metalloproteinase-disintegrin-like Eoc1 (Svmp3-Eoc1) from Echis ocellatus (Ocellated saw-scaled viper).